The chain runs to 145 residues: Transcriptional regulator SlyA (145 aa).

The HTH marR-type domain maps to 2 to 135 (ELPLGSDLAR…LALLVSRLEK (134 aa)). Positions 49-72 (QIQLAKAIGIEQPSLVRTLDQLEE) form a DNA-binding region, H-T-H motif.

Belongs to the SlyA family. In terms of assembly, homodimer.

In terms of biological role, transcription regulator that can specifically activate or repress expression of target genes. Regulates genes involved in production of antibiotic and exoenzyme virulence determinants in the phytopathogen. Required for the expression of the virulence protein evf during Drosophila melanogaster infection. This chain is Transcriptional regulator SlyA, found in Pectobacterium carotovorum subsp. carotovorum (Erwinia carotovora subsp. carotovora).